The following is a 574-amino-acid chain: Zinc finger and BTB domain-containing protein 3 (574 aa).

Residues 74–142 enclose the BTB domain; that stretch reads CDCTVMVGST…MYAGQLTLRG (69 aa). 2 disordered regions span residues 175 to 277 and 305 to 346; these read AEAD…SSTE and SLRV…APAP. Residues K181 and K182 each participate in a glycyl lysine isopeptide (Lys-Gly) (interchain with G-Cter in SUMO2) cross-link. Polar residues predominate over residues 187-212; it reads NSQLPSLEFLSSTSRGTQPSLASAET. Over residues 323-334 the composition is skewed to low complexity; that stretch reads PPASAPTSAPAP. S362 carries the phosphoserine modification. The disordered stretch occupies residues 364–403; it reads EETDVSDEQPQGPERAFPSGGAVYGAQPSQPEAFEDPGAA. 2 consecutive C2H2-type zinc fingers follow at residues 472–494 and 500–523; these read PTCK…ATVH and YECR…RKAH. Residues 526-535 show a composition bias toward basic and acidic residues; sequence DLAKRSKPDP. Residues 526–574 are disordered; that stretch reads DLAKRSKPDPEVGPLLGVQPLPGSPTADRQSSSGGGPPKDFVLAPKTNI. Residue K532 forms a Glycyl lysine isopeptide (Lys-Gly) (interchain with G-Cter in SUMO2) linkage. Position 549 is a phosphoserine (S549).

The protein localises to the nucleus. Its function is as follows. May be involved in transcriptional regulation. The protein is Zinc finger and BTB domain-containing protein 3 (ZBTB3) of Homo sapiens (Human).